The following is a 647-amino-acid chain: Acetyl-coenzyme A synthetase (647 aa).

Residues 190 to 193 (RGGR), Thr308, and Asn332 contribute to the CoA site. ATP is bound by residues 384 to 386 (GEP), 408 to 413 (DTWWQT), Asp497, and Arg512. Residue Ser520 participates in CoA binding. Arg523 provides a ligand contact to ATP. Residues Val534, His536, and Val539 each contribute to the Mg(2+) site. Arg581 contributes to the CoA binding site. Lys606 bears the N6-acetyllysine mark.

This sequence belongs to the ATP-dependent AMP-binding enzyme family. It depends on Mg(2+) as a cofactor. Acetylated. Deacetylation by the SIR2-homolog deacetylase activates the enzyme.

The enzyme catalyses acetate + ATP + CoA = acetyl-CoA + AMP + diphosphate. Functionally, catalyzes the conversion of acetate into acetyl-CoA (AcCoA), an essential intermediate at the junction of anabolic and catabolic pathways. AcsA undergoes a two-step reaction. In the first half reaction, AcsA combines acetate with ATP to form acetyl-adenylate (AcAMP) intermediate. In the second half reaction, it can then transfer the acetyl group from AcAMP to the sulfhydryl group of CoA, forming the product AcCoA. This chain is Acetyl-coenzyme A synthetase, found in Parvibaculum lavamentivorans (strain DS-1 / DSM 13023 / NCIMB 13966).